We begin with the raw amino-acid sequence, 275 residues long: Pantothenate synthetase (275 aa).

Residue 26–33 (MGNLHDGH) participates in ATP binding. Catalysis depends on H33, which acts as the Proton donor. Position 57 (Q57) interacts with (R)-pantoate. Q57 contacts beta-alanine. 144–147 (GKKD) contacts ATP. Residue Q150 participates in (R)-pantoate binding. ATP contacts are provided by residues V173 and 181–184 (LSSR).

The protein belongs to the pantothenate synthetase family. As to quaternary structure, homodimer.

Its subcellular location is the cytoplasm. It carries out the reaction (R)-pantoate + beta-alanine + ATP = (R)-pantothenate + AMP + diphosphate + H(+). The protein operates within cofactor biosynthesis; (R)-pantothenate biosynthesis; (R)-pantothenate from (R)-pantoate and beta-alanine: step 1/1. Its function is as follows. Catalyzes the condensation of pantoate with beta-alanine in an ATP-dependent reaction via a pantoyl-adenylate intermediate. This is Pantothenate synthetase from Azoarcus sp. (strain BH72).